We begin with the raw amino-acid sequence, 315 residues long: Cytochrome f (315 aa).

An N-terminal signal peptide occupies residues Met-1–Ala-30. Tyr-31, Cys-51, Cys-54, and His-55 together coordinate heme. Residues Ile-281–Leu-300 traverse the membrane as a helical segment.

Belongs to the cytochrome f family. As to quaternary structure, the 4 large subunits of the cytochrome b6-f complex are cytochrome b6, subunit IV (17 kDa polypeptide, petD), cytochrome f and the Rieske protein, while the 4 small subunits are PetG, PetL, PetM and PetN. The complex functions as a dimer. Requires heme as cofactor.

It is found in the plastid. The protein resides in the chloroplast thylakoid membrane. In terms of biological role, component of the cytochrome b6-f complex, which mediates electron transfer between photosystem II (PSII) and photosystem I (PSI), cyclic electron flow around PSI, and state transitions. This chain is Cytochrome f (petA), found in Chlorella vulgaris (Green alga).